We begin with the raw amino-acid sequence, 375 residues long: uncharacterized protein (375 aa).

Over 1–2 (MR) the chain is Cytoplasmic. Residues 3–23 (WYSYVIPAVILSIIAISGVWW) form a helical; Signal-anchor for type II membrane protein membrane-spanning segment. Residues 24-375 (NATLGTRLDQ…YIEQRLFPQP (352 aa)) lie on the Lumenal side of the membrane.

It belongs to the glycosyltransferase 34 family.

It localises to the endoplasmic reticulum membrane. It is found in the golgi apparatus membrane. This is an uncharacterized protein from Schizosaccharomyces pombe (strain 972 / ATCC 24843) (Fission yeast).